A 302-amino-acid polypeptide reads, in one-letter code: B3 domain-containing protein At3g17010 (302 aa).

The TF-B3 1 DNA-binding region spans 21-116 (FFKIFQRADL…VFHVNIYEQN (96 aa)). The disordered stretch occupies residues 123–192 (PRKFQTMGPS…KVKKKSKSKS (70 aa)). Basic and acidic residues predominate over residues 135-174 (IKKEEGENSLIDVKKEEESDESPGRAEFLVRKKKTEDSKS). Positions 175 to 192 (SKKKMTRNKVKKKSKSKS) are enriched in basic residues. A DNA-binding region (TF-B3 2) is located at residues 199–292 (VPEFKITIRK…EFVLLTSKKN (94 aa)).

The protein resides in the nucleus. The sequence is that of B3 domain-containing protein At3g17010 from Arabidopsis thaliana (Mouse-ear cress).